We begin with the raw amino-acid sequence, 377 residues long: Methionine import ATP-binding protein MetN 2 (377 aa).

One can recognise an ABC transporter domain in the interval 25 to 262 (IRIEHLSKTF…PKSAVARSFL (238 aa)). An ATP-binding site is contributed by 59 to 66 (GRSGAGKS).

Belongs to the ABC transporter superfamily. Methionine importer (TC 3.A.1.24) family. The complex is composed of two ATP-binding proteins (MetN), two transmembrane proteins (MetI) and a solute-binding protein (MetQ).

The protein localises to the cell inner membrane. It carries out the reaction L-methionine(out) + ATP + H2O = L-methionine(in) + ADP + phosphate + H(+). The enzyme catalyses D-methionine(out) + ATP + H2O = D-methionine(in) + ADP + phosphate + H(+). Functionally, part of the ABC transporter complex MetNIQ involved in methionine import. Responsible for energy coupling to the transport system. The protein is Methionine import ATP-binding protein MetN 2 of Rhodopseudomonas palustris (strain ATCC BAA-98 / CGA009).